The primary structure comprises 37 residues: Large ribosomal subunit protein bL36 (37 aa).

This sequence belongs to the bacterial ribosomal protein bL36 family.

In Syntrophomonas wolfei subsp. wolfei (strain DSM 2245B / Goettingen), this protein is Large ribosomal subunit protein bL36.